Reading from the N-terminus, the 55-residue chain is ATP synthase F(0) complex subunit 8 (55 aa).

The chain crosses the membrane as a helical span at residues 7-24 (SPWFFIMLTTWLTFSLII).

This sequence belongs to the ATPase protein 8 family. Component of the ATP synthase complex composed at least of ATP5F1A/subunit alpha, ATP5F1B/subunit beta, ATP5MC1/subunit c (homooctomer), MT-ATP6/subunit a, MT-ATP8/subunit 8, ATP5ME/subunit e, ATP5MF/subunit f, ATP5MG/subunit g, ATP5MK/subunit k, ATP5MJ/subunit j, ATP5F1C/subunit gamma, ATP5F1D/subunit delta, ATP5F1E/subunit epsilon, ATP5PF/subunit F6, ATP5PB/subunit b, ATP5PD/subunit d, ATP5PO/subunit OSCP. ATP synthase complex consists of a soluble F(1) head domain (subunits alpha(3) and beta(3)) - the catalytic core - and a membrane F(0) domain - the membrane proton channel (subunits c, a, 8, e, f, g, k and j). These two domains are linked by a central stalk (subunits gamma, delta, and epsilon) rotating inside the F1 region and a stationary peripheral stalk (subunits F6, b, d, and OSCP).

It is found in the mitochondrion membrane. Its function is as follows. Subunit 8, of the mitochondrial membrane ATP synthase complex (F(1)F(0) ATP synthase or Complex V) that produces ATP from ADP in the presence of a proton gradient across the membrane which is generated by electron transport complexes of the respiratory chain. ATP synthase complex consist of a soluble F(1) head domain - the catalytic core - and a membrane F(1) domain - the membrane proton channel. These two domains are linked by a central stalk rotating inside the F(1) region and a stationary peripheral stalk. During catalysis, ATP synthesis in the catalytic domain of F(1) is coupled via a rotary mechanism of the central stalk subunits to proton translocation. In vivo, can only synthesize ATP although its ATP hydrolase activity can be activated artificially in vitro. Part of the complex F(0) domain. The sequence is that of ATP synthase F(0) complex subunit 8 from Columbina passerina (Common ground-dove).